We begin with the raw amino-acid sequence, 115 residues long: U3-lycotoxin-Ls1a (115 aa).

The N-terminal stretch at 1–20 is a signal peptide; that stretch reads MKFVLLFGVLLVTLFSYSSA. The propeptide occupies 21–44; sequence EMLDDFDQAVEDELLSLIEKEEAR. 4 disulfide bridges follow: cysteine 48-cysteine 63, cysteine 55-cysteine 72, cysteine 62-cysteine 87, and cysteine 74-cysteine 85.

The protein belongs to the neurotoxin 19 (CSTX) family. 01 subfamily. Expressed by the venom gland.

The protein resides in the secreted. This is U3-lycotoxin-Ls1a from Lycosa singoriensis (Wolf spider).